We begin with the raw amino-acid sequence, 772 residues long: Cadherin-19 (772 aa).

An N-terminal signal peptide occupies residues 1-21 (MNCYLLLRFMLGIPLLWPCLG). Positions 22 to 43 (ATENSQTKKVKQPVRSHLRVKR) are excised as a propeptide. Cadherin domains lie at 44–148 (GWVW…EPKF), 149–256 (LDEP…KPIF), 257–370 (KESL…PPLF), 371–470 (LLPY…APEF), and 470–581 (FSQY…STQT). The Extracellular segment spans residues 44–596 (GWVWNQFFVP…LVLSMGFKTE (553 aa)). Asn-57 and Asn-74 each carry an N-linked (GlcNAc...) asparagine glycan. 6 N-linked (GlcNAc...) asparagine glycosylation sites follow: Asn-419, Asn-437, Asn-508, Asn-515, Asn-516, and Asn-534. A helical transmembrane segment spans residues 597 to 617 (VIIAILICIMIIFGFIFLTLG). Topologically, residues 618–772 (LKQRRKQILF…MFGSAVQSNN (155 aa)) are cytoplasmic.

As to expression, expressed in many tissues, with the exception of uterus.

The protein localises to the cell membrane. In terms of biological role, cadherins are calcium-dependent cell adhesion proteins. They preferentially interact with themselves in a homophilic manner in connecting cells; cadherins may thus contribute to the sorting of heterogeneous cell types. The sequence is that of Cadherin-19 (CDH19) from Homo sapiens (Human).